The primary structure comprises 212 residues: Uridine kinase (212 aa).

13–20 (GASASGKS) contacts ATP.

The protein belongs to the uridine kinase family.

It localises to the cytoplasm. The catalysed reaction is uridine + ATP = UMP + ADP + H(+). It catalyses the reaction cytidine + ATP = CMP + ADP + H(+). It participates in pyrimidine metabolism; CTP biosynthesis via salvage pathway; CTP from cytidine: step 1/3. The protein operates within pyrimidine metabolism; UMP biosynthesis via salvage pathway; UMP from uridine: step 1/1. The sequence is that of Uridine kinase from Shewanella baltica (strain OS155 / ATCC BAA-1091).